A 576-amino-acid polypeptide reads, in one-letter code: Malonate--CoA ligase ACSF3, mitochondrial (576 aa).

A mitochondrion-targeting transit peptide spans 1–83 (MLPHVVLTFR…RSLRLSQEIC (83 aa)). ATP contacts are provided by residues 202–210 (TSGTTGRPK), aspartate 457, arginine 471, and lysine 563.

It belongs to the ATP-dependent AMP-binding enzyme family.

It is found in the mitochondrion. The catalysed reaction is tetracosanoate + ATP + CoA = tetracosanoyl-CoA + AMP + diphosphate. The enzyme catalyses malonate + ATP + CoA = malonyl-CoA + AMP + diphosphate. Functionally, catalyzes the initial reaction in intramitochondrial fatty acid synthesis, by activating malonate and methylmalonate, but not acetate, into their respective CoA thioester. May have some preference toward very-long-chain substrates. This is Malonate--CoA ligase ACSF3, mitochondrial from Homo sapiens (Human).